Here is a 424-residue protein sequence, read N- to C-terminus: Calreticulin (424 aa).

Residues 1 to 19 (MRLLLCLIFLVFVFNFALS) form the signal peptide. Cysteines 105 and 137 form a disulfide. An alpha-D-glucoside is bound by residues tyrosine 109, lysine 111, tyrosine 128, and aspartate 135. 7 repeat units span residues 191–202 (IQAGNLADDWEL), 210–221 (DPKQSKPVDWVD), 227–238 (DPEDVKPAGHDD), 246–256 (PEAVKPEDWNE), 260–270 (GEWEAPTIANP), 274–284 (GEWKAKKIPNP), and 288–298 (GEWVHPLIDNP). A 4 X 12 AA approximate repeats region spans residues 191-256 (IQAGNLADDW…EAVKPEDWNE (66 aa)). Residues 260–298 (GEWEAPTIANPEYKGEWKAKKIPNPEYKGEWVHPLIDNP) form a 3 X 11 AA approximate repeats region. An alpha-D-glucoside is bound at residue glutamate 318. Residues 370-385 (RKKADEKLAAEKAAEK) are compositionally biased toward basic and acidic residues. Positions 370 to 424 (RKKADEKLAAEKAAEKEAEEADEEEEEVAEEDLVKTDDKKEEVKKSTKKVDHDEL) are disordered. Residues 386–400 (EAEEADEEEEEVAEE) show a composition bias toward acidic residues. Residues 401–424 (DLVKTDDKKEEVKKSTKKVDHDEL) show a composition bias toward basic and acidic residues. Residues 421–424 (HDEL) carry the Prevents secretion from ER motif.

This sequence belongs to the calreticulin family.

It is found in the endoplasmic reticulum lumen. In terms of biological role, molecular calcium-binding chaperone promoting folding, oligomeric assembly and quality control in the ER via the calreticulin/calnexin cycle. This lectin may interact transiently with almost all of the monoglucosylated glycoproteins that are synthesized in the ER. This is Calreticulin (crtA) from Dictyostelium discoideum (Social amoeba).